The chain runs to 154 residues: UPF0260 protein HI_1355 (154 aa).

The protein belongs to the UPF0260 family.

The sequence is that of UPF0260 protein HI_1355 from Haemophilus influenzae (strain ATCC 51907 / DSM 11121 / KW20 / Rd).